The sequence spans 378 residues: Quinolinate synthase (378 aa).

2 residues coordinate iminosuccinate: His-59 and Ser-80. Cys-125 is a [4Fe-4S] cluster binding site. Iminosuccinate is bound by residues Tyr-151–Asn-153 and Ser-168. Cys-212 is a [4Fe-4S] cluster binding site. Residues His-238–Glu-240 and Thr-255 contribute to the iminosuccinate site. Cys-309 contributes to the [4Fe-4S] cluster binding site.

The protein belongs to the quinolinate synthase family. Type 1 subfamily. [4Fe-4S] cluster is required as a cofactor.

The protein localises to the cytoplasm. The catalysed reaction is iminosuccinate + dihydroxyacetone phosphate = quinolinate + phosphate + 2 H2O + H(+). It participates in cofactor biosynthesis; NAD(+) biosynthesis; quinolinate from iminoaspartate: step 1/1. Catalyzes the condensation of iminoaspartate with dihydroxyacetone phosphate to form quinolinate. The sequence is that of Quinolinate synthase from Burkholderia pseudomallei (strain 1106a).